A 573-amino-acid polypeptide reads, in one-letter code: Glutathione/L-cysteine transport system ATP-binding/permease protein CydC (573 aa).

The Cytoplasmic portion of the chain corresponds to 1–15; the sequence is MRALLPYLALYKRHK. 2 helical membrane passes run 16–36 and 37–57; these read WMLS…IGLL and TLSG…LYSF. The region spanning 20-306 is the ABC transmembrane type-1 domain; sequence LGIVLAIVTL…VTGAFQHLGQ (287 aa). Residues 58–136 lie on the Cytoplasmic side of the membrane; the sequence is NYMLPAAGVR…VDTLDHLYLR (79 aa). A helical membrane pass occupies residues 137–157; sequence VISPLVGAFVVIMVVTIGLSF. The Periplasmic segment spans residues 158-161; that stretch reads LDFT. The helical transmembrane segment at 162–182 threads the bilayer; the sequence is LAFTLGGIMLLTLFLMPPLFY. Residues 183-249 are Cytoplasmic-facing; it reads RAGKSTGQNL…QSELTALSQA (67 aa). The chain crosses the membrane as a helical span at residues 250-270; that stretch reads IMLLIGALAVILMLWMASGGV. The Periplasmic portion of the chain corresponds to 271–276; that stretch reads GGNAQP. Residues 277 to 297 traverse the membrane as a helical segment; that stretch reads GALIALFVFCALAAFEALAPV. The Cytoplasmic portion of the chain corresponds to 298-573; sequence TGAFQHLGQV…GRYYQFKQGL (276 aa). One can recognise an ABC transporter domain in the interval 339 to 572; the sequence is LTLRDVQFTY…QGRYYQFKQG (234 aa). 373-380 is a binding site for ATP; the sequence is GRTGCGKS.

It belongs to the ABC transporter superfamily. Cysteine exporter (TC 3.A.1.129.1) family. Forms a heterodimer with CydD.

The protein localises to the cell inner membrane. It carries out the reaction L-cysteine(in) + ATP + H2O = L-cysteine(out) + ADP + phosphate + H(+). It catalyses the reaction glutathione(in) + ATP + H2O = glutathione(out) + ADP + phosphate + H(+). With respect to regulation, ATPase activity is stimulated by various thiol compounds. The presence of heme leads to a further enhancement of thiol-stimulated ATPase activity, although a large excess of heme inhibits activity. Glutathione transport is inhibited by sodium orthovanadate, an inhibitor of ABC-type transport systems, but not by the proton ionophore carbonyl cyanide m-chlorophenylhydrazone (CCCP). In terms of biological role, part of the ABC transporter complex CydDC that exports the reduced low-molecular-weight thiols cysteine and glutathione to the periplasm. Export of these thiol-containing redox-active molecules may be crucial for redox homeostasis in the periplasm, permitting correct assembly of various respiratory complexes and formation of correct disulfide bonds in periplasmic and secreted proteins. CydC contains transmembrane domains (TMD), which form a pore in the inner membrane, and an ATP-binding domain (NBD), which is responsible for energy generation. Required for the assembly of functional cytochrome bd-type quinol oxidases and periplasmic c-type cytochromes. Overexpression of CydDC under anaerobic conditions also results in the formation of a heme biosynthesis-derived pigment, P-574. CydDC binds heme b, but heme is probably not transported by the complex and instead has a role in regulating ATPase activity. Its function is as follows. Conversely, a more recent study suggests an alternative function of CydDC: authors suggest that CydDC does not mediate the export of L-cysteine but rather reduces cytoplasmic L-cystine to L-cysteine. The principle function of CydDC would be to maintain the reduced state of cytoplasmic L-cysteine, thereby providing an important connection between sulfur metabolism, oxidative stress and resistance to antibiotics. This is Glutathione/L-cysteine transport system ATP-binding/permease protein CydC from Escherichia coli (strain K12).